The following is a 116-amino-acid chain: Large ribosomal subunit protein bL20 (116 aa).

The protein belongs to the bacterial ribosomal protein bL20 family.

Binds directly to 23S ribosomal RNA and is necessary for the in vitro assembly process of the 50S ribosomal subunit. It is not involved in the protein synthesizing functions of that subunit. The sequence is that of Large ribosomal subunit protein bL20 from Acaryochloris marina (strain MBIC 11017).